The sequence spans 188 residues: uncharacterized protein (188 aa).

This is an uncharacterized protein from Saccharomyces cerevisiae (strain ATCC 204508 / S288c) (Baker's yeast).